The primary structure comprises 428 residues: Histidine--tRNA ligase (428 aa).

The protein belongs to the class-II aminoacyl-tRNA synthetase family. In terms of assembly, homodimer.

The protein localises to the cytoplasm. It catalyses the reaction tRNA(His) + L-histidine + ATP = L-histidyl-tRNA(His) + AMP + diphosphate + H(+). The sequence is that of Histidine--tRNA ligase from Halalkalibacterium halodurans (strain ATCC BAA-125 / DSM 18197 / FERM 7344 / JCM 9153 / C-125) (Bacillus halodurans).